The following is a 72-amino-acid chain: MSAIFNFQSLLIVILLLICTCAYLRSLVPNLLDKNKTGVLGIFWKCARIGERKSPYVAVCCVVMAFSILFMQ.

The first 26 residues, 1-26 (MSAIFNFQSLLIVILLLICTCAYLRS), serve as a signal peptide directing secretion. Over 27–53 (LVPNLLDKNKTGVLGIFWKCARIGERK) the chain is Extracellular. Residue Asn35 is glycosylated (N-linked (GlcNAc...) asparagine). Residues 54–71 (SPYVAVCCVVMAFSILFM) traverse the membrane as a helical segment. Residue Gln72 is a topological domain, cytoplasmic.

It belongs to the KISH family.

It localises to the golgi apparatus membrane. Its function is as follows. Involved in the early part of the secretory pathway. The chain is Protein kish-A (tmem167a) from Xenopus laevis (African clawed frog).